The following is a 300-amino-acid chain: Protoheme IX farnesyltransferase (300 aa).

9 helical membrane-spanning segments follow: residues 21-43, 45-65, 94-114, 117-137, 145-167, 171-193, 213-233, 235-255, and 272-292; these read PRVVELLLLTTVPTMILAQRGVP, PLSVLSVLLGGAMSAGAAGAF, ASLIFAWMLCVISVLWFLLFV, LSALLSAIAVFLYAFFYSIVL, IVWGGLAGCMPVLIAWAAVTGSI, AIVLFAVVFLWTPPHYWPLSIHY, LVVLQVLLYAFAVVACTLLLI, VAHMTPLYGLFSAVLGAWFVY, and AMHIFSLSNTYLSLVFLSVGI.

Belongs to the UbiA prenyltransferase family. Protoheme IX farnesyltransferase subfamily.

Its subcellular location is the cell membrane. The enzyme catalyses heme b + (2E,6E)-farnesyl diphosphate + H2O = Fe(II)-heme o + diphosphate. The protein operates within porphyrin-containing compound metabolism; heme O biosynthesis; heme O from protoheme: step 1/1. In terms of biological role, converts heme B (protoheme IX) to heme O by substitution of the vinyl group on carbon 2 of heme B porphyrin ring with a hydroxyethyl farnesyl side group. This chain is Protoheme IX farnesyltransferase, found in Tropheryma whipplei (strain TW08/27) (Whipple's bacillus).